Reading from the N-terminus, the 135-residue chain is Small ribosomal subunit protein bS16m (135 aa).

A mitochondrion-targeting transit peptide spans 1 to 34 (MVQLTTVLCKAYRGGHLTIRLALGGCTNRPFYRI). Thr-130 bears the Phosphothreonine mark.

The protein belongs to the bacterial ribosomal protein bS16 family. As to quaternary structure, component of the mitochondrial ribosome small subunit (28S) which comprises a 12S rRNA and about 30 distinct proteins.

The protein resides in the mitochondrion. The sequence is that of Small ribosomal subunit protein bS16m (MRPS16) from Bos taurus (Bovine).